We begin with the raw amino-acid sequence, 110 residues long: Large ribosomal subunit protein uL22 (110 aa).

Belongs to the universal ribosomal protein uL22 family. Part of the 50S ribosomal subunit.

This protein binds specifically to 23S rRNA; its binding is stimulated by other ribosomal proteins, e.g. L4, L17, and L20. It is important during the early stages of 50S assembly. It makes multiple contacts with different domains of the 23S rRNA in the assembled 50S subunit and ribosome. Functionally, the globular domain of the protein is located near the polypeptide exit tunnel on the outside of the subunit, while an extended beta-hairpin is found that lines the wall of the exit tunnel in the center of the 70S ribosome. The chain is Large ribosomal subunit protein uL22 from Vibrio parahaemolyticus serotype O3:K6 (strain RIMD 2210633).